A 637-amino-acid chain; its full sequence is Threonine--tRNA ligase (637 aa).

The TGS domain occupies 1–61 (MPNVKLPDGN…KEDCSLIIVT (61 aa)). The interval 242 to 533 (DHRKLGKALD…LIEHYAGKLP (292 aa)) is catalytic. 3 residues coordinate Zn(2+): cysteine 333, histidine 384, and histidine 510.

The protein belongs to the class-II aminoacyl-tRNA synthetase family. Homodimer. Requires Zn(2+) as cofactor.

The protein resides in the cytoplasm. It carries out the reaction tRNA(Thr) + L-threonine + ATP = L-threonyl-tRNA(Thr) + AMP + diphosphate + H(+). In terms of biological role, catalyzes the attachment of threonine to tRNA(Thr) in a two-step reaction: L-threonine is first activated by ATP to form Thr-AMP and then transferred to the acceptor end of tRNA(Thr). Also edits incorrectly charged L-seryl-tRNA(Thr). The sequence is that of Threonine--tRNA ligase from Legionella pneumophila (strain Paris).